The primary structure comprises 273 residues: Dermonecrotic toxin LsaSicTox-alphaIB1bii (273 aa).

His-5 is an active-site residue. Mg(2+) contacts are provided by Glu-25 and Asp-27. The active-site Nucleophile is the His-41. Intrachain disulfides connect Cys-45–Cys-51 and Cys-47–Cys-190. Mg(2+) is bound at residue Asp-85.

Belongs to the arthropod phospholipase D family. Class II subfamily. Requires Mg(2+) as cofactor. In terms of tissue distribution, expressed by the venom gland.

Its subcellular location is the secreted. It carries out the reaction an N-(acyl)-sphingosylphosphocholine = an N-(acyl)-sphingosyl-1,3-cyclic phosphate + choline. The catalysed reaction is an N-(acyl)-sphingosylphosphoethanolamine = an N-(acyl)-sphingosyl-1,3-cyclic phosphate + ethanolamine. It catalyses the reaction a 1-acyl-sn-glycero-3-phosphocholine = a 1-acyl-sn-glycero-2,3-cyclic phosphate + choline. The enzyme catalyses a 1-acyl-sn-glycero-3-phosphoethanolamine = a 1-acyl-sn-glycero-2,3-cyclic phosphate + ethanolamine. Its function is as follows. Dermonecrotic toxins cleave the phosphodiester linkage between the phosphate and headgroup of certain phospholipids (sphingolipid and lysolipid substrates), forming an alcohol (often choline) and a cyclic phosphate. This toxin acts on sphingomyelin (SM). It may also act on ceramide phosphoethanolamine (CPE), lysophosphatidylcholine (LPC) and lysophosphatidylethanolamine (LPE), but not on lysophosphatidylserine (LPS), and lysophosphatidylglycerol (LPG). It acts by transphosphatidylation, releasing exclusively cyclic phosphate products as second products. Induces dermonecrosis, hemolysis, increased vascular permeability, edema, inflammatory response, and platelet aggregation. The protein is Dermonecrotic toxin LsaSicTox-alphaIB1bii of Loxosceles sabina (Tucson recluse spider).